A 728-amino-acid polypeptide reads, in one-letter code: Ribosome biogenesis protein bop1-B (728 aa).

The tract at residues 1 to 114 (MKRGSKRESG…ENDSSDEEDI (114 aa)) is disordered. Over residues 50–67 (SGTDSSDDEEDHSSEEVQ) the composition is skewed to acidic residues. WD repeat units follow at residues 393–432 (GHKD…CMKS), 434–474 (VLEG…RLLC), 514–556 (KHQK…SQNP), 559–597 (KNKG…LTKK), 600–639 (TNCK…KPYK), 643–682 (HHKK…DLLQ), and 698–728 (HRDL…RLFT).

It belongs to the WD repeat BOP1/ERB1 family. In terms of assembly, component of the PeBoW complex, composed of bop1, pes1 and wdr12. The complex is held together by bop1, which interacts with pes1 via its N-terminal domain and with wdr12 via a high-affinity interaction between the seven-bladed beta-propeller domains of the 2 proteins. The PeBoW complex associates with the 66S pre-ribosome.

Its subcellular location is the nucleus. It localises to the nucleolus. The protein resides in the nucleoplasm. Component of the PeBoW complex, which is required for maturation of 28S and 5.8S ribosomal RNAs and formation of the 60S ribosome. In Xenopus laevis (African clawed frog), this protein is Ribosome biogenesis protein bop1-B (bop1-b).